The following is a 631-amino-acid chain: Dolichyl-diphosphooligosaccharide--protein glycosyltransferase subunit 2 (631 aa).

The N-terminal stretch at 1–22 (MALPGSSTVFLLALTIIASTQA) is a signal peptide. The Lumenal segment spans residues 23–540 (LTPTHYLTKH…REPEKRPPTV (518 aa)). Asn106 is a glycosylation site (N-linked (GlcNAc...) asparagine). Lys154 participates in a covalent cross-link: Glycyl lysine isopeptide (Lys-Gly) (interchain with G-Cter in ubiquitin). Residues 541-561 (VSNTFTALILSPLLLLFALWI) traverse the membrane as a helical segment. Residues 562–571 (RIGANVSNFT) lie on the Cytoplasmic side of the membrane. The helical transmembrane segment at 572-592 (FAPSTIVFHLGHAAMLGLMYV) threads the bilayer. Topologically, residues 593 to 596 (YWTQ) are lumenal. The helical transmembrane segment at 597–617 (LNMFQTLKYLAILGSVTFLAG) threads the bilayer. The Cytoplasmic portion of the chain corresponds to 618 to 631 (NRMLAQQAIKRTAH).

Belongs to the SWP1 family. As to quaternary structure, component of the oligosaccharyltransferase (OST) complex. OST exists in two different complex forms which contain common core subunits RPN1, RPN2, OST48, OST4, DAD1 and TMEM258, either STT3A or STT3B as catalytic subunits, and form-specific accessory subunits. STT3A complex assembly occurs through the formation of 3 subcomplexes. Subcomplex 1 contains RPN1 and TMEM258, subcomplex 2 contains the STT3A-specific subunits STT3A, DC2/OSTC, and KCP2 as well as the core subunit OST4, and subcomplex 3 contains RPN2, DAD1, and OST48. The STT3A complex can form stable complexes with the Sec61 complex or with both the Sec61 and TRAP complexes. Interacts with DDI2. Interacts with TMEM35A/NACHO.

Its subcellular location is the endoplasmic reticulum. The protein resides in the endoplasmic reticulum membrane. The protein operates within protein modification; protein glycosylation. In terms of biological role, subunit of the oligosaccharyl transferase (OST) complex that catalyzes the initial transfer of a defined glycan (Glc(3)Man(9)GlcNAc(2) in eukaryotes) from the lipid carrier dolichol-pyrophosphate to an asparagine residue within an Asn-X-Ser/Thr consensus motif in nascent polypeptide chains, the first step in protein N-glycosylation. N-glycosylation occurs cotranslationally and the complex associates with the Sec61 complex at the channel-forming translocon complex that mediates protein translocation across the endoplasmic reticulum (ER). All subunits are required for a maximal enzyme activity. The chain is Dolichyl-diphosphooligosaccharide--protein glycosyltransferase subunit 2 from Bos taurus (Bovine).